The chain runs to 487 residues: Serralysin (487 aa).

Positions 1 to 16 are excised as a propeptide; the sequence is MQSTKKAIEITESNFA. His192 is a Zn(2+) binding site. Residue Glu193 is part of the active site. Zn(2+)-binding residues include His196, His202, and Tyr232. Ca(2+)-binding residues include Arg269, Gly271, Thr273, Asp301, Gly303, Gly304, Asp306, Thr343, Glu345, Gly350, Gly352, Asp354, Asn359, Ala361, Asn363, Gly367, Gly368, Ala369, Asp372, Gly376, Gly377, Gly378, Gly379, Asp381, Gly385, Gly386, Ala387, Gly388, Asp390, Asp399, Asp406, and Asp416. 2 Hemolysin-type calcium-binding repeats span residues 348-365 and 366-383; these read IGGS…NNVL and KGGA…ADEL.

This sequence belongs to the peptidase M10B family. Ca(2+) is required as a cofactor. The cofactor is Zn(2+).

The protein localises to the secreted. It catalyses the reaction Preferential cleavage of bonds with hydrophobic residues in P1'.. Its function is as follows. Naturally present in the silkworm intestine and allows the emerging moth to dissolve its cocoon. This is Serralysin from Serratia marcescens (strain ATCC 21074 / E-15).